Here is a 339-residue protein sequence, read N- to C-terminus: Uroporphyrinogen decarboxylase (339 aa).

Substrate is bound by residues 23 to 27, Asp72, Tyr147, Thr202, and His315; that span reads RQAGR.

It belongs to the uroporphyrinogen decarboxylase family. As to quaternary structure, homodimer.

It is found in the cytoplasm. The catalysed reaction is uroporphyrinogen III + 4 H(+) = coproporphyrinogen III + 4 CO2. The protein operates within porphyrin-containing compound metabolism; protoporphyrin-IX biosynthesis; coproporphyrinogen-III from 5-aminolevulinate: step 4/4. Functionally, catalyzes the decarboxylation of four acetate groups of uroporphyrinogen-III to yield coproporphyrinogen-III. The chain is Uroporphyrinogen decarboxylase from Citrifermentans bemidjiense (strain ATCC BAA-1014 / DSM 16622 / JCM 12645 / Bem) (Geobacter bemidjiensis).